Consider the following 629-residue polypeptide: Endoglucanase 15 (629 aa).

Residues 1 to 30 (MAKNGGAHGAATLFGLLALASMVKLGFVAG) form the signal peptide. Residue Asp87 is the Nucleophile of the active site. Active-site residues include His421, Asp473, and Glu482. 3 N-linked (GlcNAc...) asparagine glycosylation sites follow: Asn520, Asn540, and Asn561.

The protein belongs to the glycosyl hydrolase 9 (cellulase E) family.

The protein localises to the secreted. It catalyses the reaction Endohydrolysis of (1-&gt;4)-beta-D-glucosidic linkages in cellulose, lichenin and cereal beta-D-glucans.. This chain is Endoglucanase 15, found in Oryza sativa subsp. japonica (Rice).